A 188-amino-acid chain; its full sequence is Large ribosomal subunit protein eL18 (188 aa).

Residues 153–188 (GKAPGTPHSHTKPYVRSKGRKFERARGRRASCGYKN) form a disordered region. Over residues 161–171 (SHTKPYVRSKG) the composition is skewed to basic residues.

The protein belongs to the eukaryotic ribosomal protein eL18 family. As to quaternary structure, component of the large ribosomal subunit.

The protein localises to the cytoplasm. It localises to the cytosol. It is found in the rough endoplasmic reticulum. Component of the large ribosomal subunit. The ribosome is a large ribonucleoprotein complex responsible for the synthesis of proteins in the cell. The polypeptide is Large ribosomal subunit protein eL18 (rpl18) (Oreochromis mossambicus (Mozambique tilapia)).